Reading from the N-terminus, the 123-residue chain is Small ribosomal subunit protein uS12 (123 aa).

A disordered region spans residues 1-26; sequence MPTINQLVRKPRKSRSSLNKAPALQH. Position 90 is a 3-methylthioaspartic acid (Asp-90).

The protein belongs to the universal ribosomal protein uS12 family. As to quaternary structure, part of the 30S ribosomal subunit. Contacts proteins S8 and S17. May interact with IF1 in the 30S initiation complex.

With S4 and S5 plays an important role in translational accuracy. Functionally, interacts with and stabilizes bases of the 16S rRNA that are involved in tRNA selection in the A site and with the mRNA backbone. Located at the interface of the 30S and 50S subunits, it traverses the body of the 30S subunit contacting proteins on the other side and probably holding the rRNA structure together. The combined cluster of proteins S8, S12 and S17 appears to hold together the shoulder and platform of the 30S subunit. The polypeptide is Small ribosomal subunit protein uS12 (Ehrlichia chaffeensis (strain ATCC CRL-10679 / Arkansas)).